A 267-amino-acid chain; its full sequence is Putative hydro-lyase RALTA_B1245 (267 aa).

This sequence belongs to the D-glutamate cyclase family.

This is Putative hydro-lyase RALTA_B1245 from Cupriavidus taiwanensis (strain DSM 17343 / BCRC 17206 / CCUG 44338 / CIP 107171 / LMG 19424 / R1) (Ralstonia taiwanensis (strain LMG 19424)).